The sequence spans 94 residues: MVYVSNGQVLDSRSRSPWSLSFLTDFFWGAVEFIGLFFQTLVQPDLSKDGNNSASSRFSDGRGPPGFPGRRRMGRINHGAGPTPPPMGGGGUGR.

A helical transmembrane segment spans residues 20 to 42 (LSFLTDFFWGAVEFIGLFFQTLV). The interval 48 to 94 (KDGNNSASSRFSDGRGPPGFPGRRRMGRINHGAGPTPPPMGGGGUGR) is disordered. The segment covering 49-58 (DGNNSASSRF) has biased composition (polar residues). U92 is a non-standard amino acid (selenocysteine).

This sequence belongs to the selenoprotein K family.

Its subcellular location is the endoplasmic reticulum membrane. The protein resides in the cell membrane. Required for Ca(2+) flux in immune cells and plays a role in T-cell proliferation and in T-cell and neutrophil migration. Involved in endoplasmic reticulum-associated degradation (ERAD) of soluble glycosylated proteins. Required for cell surface expression of CD36 and involved in macrophage uptake of low-density lipoprotein and in foam cell formation. Required for palmitoylation. The chain is Selenoprotein K (selenok) from Danio rerio (Zebrafish).